The primary structure comprises 346 residues: Eukaryotic translation initiation factor 3 subunit I (346 aa).

WD repeat units follow at residues 8 to 49, 50 to 91, 145 to 184, 189 to 228, and 286 to 325; these read GHER…GTYH, GHQG…KTWD, CEDSKATVAGWSYLSKYIIAGHEDGSVSQFDGKNGDLLYN, ELNQPITDLQWSHDRTYFITASKDKTSKLITAKDLEVLKT, and GHFGPLNTVAADPTGKSYASGGEDGYVRIHHFDKGYFDFM.

The protein belongs to the eIF-3 subunit I family. As to quaternary structure, component of the eukaryotic translation initiation factor 3 (eIF-3) complex.

The protein localises to the cytoplasm. Functionally, component of the eukaryotic translation initiation factor 3 (eIF-3) complex, which is involved in protein synthesis of a specialized repertoire of mRNAs and, together with other initiation factors, stimulates binding of mRNA and methionyl-tRNAi to the 40S ribosome. The eIF-3 complex specifically targets and initiates translation of a subset of mRNAs involved in cell proliferation. The chain is Eukaryotic translation initiation factor 3 subunit I (tif-34) from Neurospora crassa (strain ATCC 24698 / 74-OR23-1A / CBS 708.71 / DSM 1257 / FGSC 987).